Here is a 671-residue protein sequence, read N- to C-terminus: tRNA 5-methylaminomethyl-2-thiouridine biosynthesis bifunctional protein MnmC (671 aa).

Residues 1-245 (MVNVMNTLSF…KREMLWGEKP (245 aa)) form a tRNA (mnm(5)s(2)U34)-methyltransferase region. The segment at 272–671 (VGGGVASLFV…RKLLKGSKVE (400 aa)) is FAD-dependent cmnm(5)s(2)U34 oxidoreductase.

This sequence in the N-terminal section; belongs to the methyltransferase superfamily. tRNA (mnm(5)s(2)U34)-methyltransferase family. The protein in the C-terminal section; belongs to the DAO family. FAD serves as cofactor.

The protein localises to the cytoplasm. The enzyme catalyses 5-aminomethyl-2-thiouridine(34) in tRNA + S-adenosyl-L-methionine = 5-methylaminomethyl-2-thiouridine(34) in tRNA + S-adenosyl-L-homocysteine + H(+). Catalyzes the last two steps in the biosynthesis of 5-methylaminomethyl-2-thiouridine (mnm(5)s(2)U) at the wobble position (U34) in tRNA. Catalyzes the FAD-dependent demodification of cmnm(5)s(2)U34 to nm(5)s(2)U34, followed by the transfer of a methyl group from S-adenosyl-L-methionine to nm(5)s(2)U34, to form mnm(5)s(2)U34. The sequence is that of tRNA 5-methylaminomethyl-2-thiouridine biosynthesis bifunctional protein MnmC from Actinobacillus pleuropneumoniae serotype 3 (strain JL03).